The primary structure comprises 518 residues: GMP synthase [glutamine-hydrolyzing] (518 aa).

Positions 6 to 200 (RLLIIDFGSQ…FVRLAGFKGD (195 aa)) constitute a Glutamine amidotransferase type-1 domain. Residue Cys84 is the Nucleophile of the active site. Catalysis depends on residues His175 and Glu177. Residues 201–393 (WTMGAYREEA…LGLPESFIGR (193 aa)) enclose the GMPS ATP-PPase domain. Residue 228-234 (SGGVDSS) coordinates ATP.

As to quaternary structure, homodimer.

It carries out the reaction XMP + L-glutamine + ATP + H2O = GMP + L-glutamate + AMP + diphosphate + 2 H(+). It participates in purine metabolism; GMP biosynthesis; GMP from XMP (L-Gln route): step 1/1. Its function is as follows. Catalyzes the synthesis of GMP from XMP. The chain is GMP synthase [glutamine-hydrolyzing] from Cereibacter sphaeroides (strain ATCC 17029 / ATH 2.4.9) (Rhodobacter sphaeroides).